We begin with the raw amino-acid sequence, 338 residues long: Plasminogen (338 aa).

Residues 9–88 form the Kringle 5 domain; the sequence is CMLGIGKGYQ…LFDYCDVPQC (80 aa). 9 disulfides stabilise this stretch: cysteine 9–cysteine 88, cysteine 30–cysteine 71, cysteine 59–cysteine 83, cysteine 95–cysteine 213, cysteine 105–cysteine 113, cysteine 135–cysteine 151, cysteine 227–cysteine 294, cysteine 257–cysteine 273, and cysteine 284–cysteine 312. One can recognise a Peptidase S1 domain in the interval 109-336; the sequence is IVGGCVAIAH…FINWIERIMQ (228 aa). The residue at position 125 (serine 125) is a Phosphoserine. Active-site charge relay system residues include histidine 150 and aspartate 193. The Charge relay system role is filled by serine 288.

Belongs to the peptidase S1 family. Plasminogen subfamily. As to quaternary structure, interacts with CSPG4 and AMOT. Interacts (via the Kringle domains) with HRG; the interaction tethers PLG to the cell surface and enhances its activation. Interacts (via Kringle 4 domain) with ADA; the interaction stimulates PLG activation when in complex with DPP4. Angiostatin: Interacts with ATP5F1A; the interaction inhibits most of the angiogenic effects of angiostatin.

Its subcellular location is the secreted. It catalyses the reaction Preferential cleavage: Lys-|-Xaa &gt; Arg-|-Xaa, higher selectivity than trypsin. Converts fibrin into soluble products.. With respect to regulation, converted into plasmin by plasminogen activators, both plasminogen and its activator being bound to fibrin. Activated with catalytic amounts of streptokinase. In terms of biological role, plasmin dissolves the fibrin of blood clots and acts as a proteolytic factor in a variety of other processes including embryonic development, tissue remodeling, tumor invasion, and inflammation. In ovulation, weakens the walls of the Graafian follicle. It activates the urokinase-type plasminogen activator, collagenases and several complement zymogens, such as C1, C4 and C5. Cleavage of fibronectin and laminin leads to cell detachment and apoptosis. Also cleaves fibrin, thrombospondin and von Willebrand factor. Its role in tissue remodeling and tumor invasion may be modulated by CSPG4. Binds to cells. The sequence is that of Plasminogen (PLG) from Equus caballus (Horse).